A 212-amino-acid polypeptide reads, in one-letter code: Probable nicotinate-nucleotide adenylyltransferase (212 aa).

Belongs to the NadD family.

The catalysed reaction is nicotinate beta-D-ribonucleotide + ATP + H(+) = deamido-NAD(+) + diphosphate. The protein operates within cofactor biosynthesis; NAD(+) biosynthesis; deamido-NAD(+) from nicotinate D-ribonucleotide: step 1/1. Catalyzes the reversible adenylation of nicotinate mononucleotide (NaMN) to nicotinic acid adenine dinucleotide (NaAD). The polypeptide is Probable nicotinate-nucleotide adenylyltransferase (Methylibium petroleiphilum (strain ATCC BAA-1232 / LMG 22953 / PM1)).